A 267-amino-acid polypeptide reads, in one-letter code: MDSPFNFTRRRSHVVANERRDMIQPSSSIPRPITNNIWTLNDYLNFDKSDVHTGPPRSLEIKKLILDTLKEMPELWTQRCSKKPHWELLGFNILQRTGMRIGTCQLMETFRNARKHVNAKIRKCWKEGLSKAETEIKCSNWDLFENFRFFFEFKCRHWQFPDDCDDLVVELDTEEGIISNPSLPPNEVCDQNVEILQSATKESIMPDVPEHYLDFEQHLKAKIQQALNKHPGQEKLLKNAIFTTLNGIENRDHKSLEELFSSLSSNH.

This sequence belongs to the lin-8 family.

This is an uncharacterized protein from Caenorhabditis elegans.